We begin with the raw amino-acid sequence, 183 residues long: Triggering receptor expressed on myeloid cells 3 (183 aa).

An N-terminal signal peptide occupies residues 1–19; sequence MSPLLLWLGLMLCVSGLQA. At 20 to 138 the chain is on the extracellular side; that stretch reads GDEEEHKCFL…AWCQGKPVMV (119 aa). The 99-residue stretch at 30-128 folds into the Ig-like V-type domain; the sequence is EGENLTLTCP…VIILRQRIRL (99 aa). Asparagine 33 is a glycosylation site (N-linked (GlcNAc...) asparagine). A disulfide bridge links cysteine 38 with cysteine 110. A helical membrane pass occupies residues 139 to 159; it reads IVLTCGFILNKGLVFSVLFVF. The Cytoplasmic portion of the chain corresponds to 160 to 183; that stretch reads LCKAGPKVLQPSKTSKVQGVSEKQ.

In terms of assembly, interacts with TYROBP/DAP12. In terms of tissue distribution, expressed in macrophages and in T-cells.

It localises to the cell membrane. Functionally, forms a receptor signaling complex with TYROBP/DAP12 which mediates activation of macrophages as part of the innate immune response. The sequence is that of Triggering receptor expressed on myeloid cells 3 from Mus musculus (Mouse).